The following is a 431-amino-acid chain: Intraflagellar transport protein 38 (431 aa).

Residues Ser-177–Ser-218 adopt a coiled-coil conformation. The segment at Ile-346 to Phe-431 is disordered. Positions Ile-352–Gln-370 are enriched in acidic residues. The segment covering Pro-384–Glu-405 has biased composition (basic and acidic residues). A compositionally biased stretch (acidic residues) spans Gly-420 to Phe-431.

Belongs to the CLUAP1 family.

It localises to the cell projection. The protein resides in the cilium. Its subcellular location is the flagellum. The protein localises to the cytoplasm. It is found in the cytoskeleton. It localises to the flagellum axoneme. The protein resides in the flagellum basal body. Its function is as follows. Component of the intraflagellar transport complex B (IFT-B) involved in flagellar assembly. This Giardia intestinalis (strain ATCC 50803 / WB clone C6) (Giardia lamblia) protein is Intraflagellar transport protein 38.